A 233-amino-acid chain; its full sequence is Phosphonates import ATP-binding protein PhnC 1 (233 aa).

The 226-residue stretch at 2 to 227 folds into the ABC transporter domain; it reads LSVSGLTKRY…PAAALDREDI (226 aa). An ATP-binding site is contributed by 34 to 41; the sequence is GRSGAGKT.

This sequence belongs to the ABC transporter superfamily. Phosphonates importer (TC 3.A.1.9.1) family. As to quaternary structure, the complex is composed of two ATP-binding proteins (PhnC), two transmembrane proteins (PhnE) and a solute-binding protein (PhnD).

The protein resides in the cell membrane. It catalyses the reaction phosphonate(out) + ATP + H2O = phosphonate(in) + ADP + phosphate + H(+). Its function is as follows. Part of the ABC transporter complex PhnCDE involved in phosphonates import. Responsible for energy coupling to the transport system. This Natronomonas pharaonis (strain ATCC 35678 / DSM 2160 / CIP 103997 / JCM 8858 / NBRC 14720 / NCIMB 2260 / Gabara) (Halobacterium pharaonis) protein is Phosphonates import ATP-binding protein PhnC 1.